The sequence spans 344 residues: Phenylalanine--tRNA ligase alpha subunit (344 aa).

Glu256 contacts Mg(2+).

It belongs to the class-II aminoacyl-tRNA synthetase family. Phe-tRNA synthetase alpha subunit type 1 subfamily. Tetramer of two alpha and two beta subunits. Mg(2+) serves as cofactor.

The protein localises to the cytoplasm. It catalyses the reaction tRNA(Phe) + L-phenylalanine + ATP = L-phenylalanyl-tRNA(Phe) + AMP + diphosphate + H(+). The sequence is that of Phenylalanine--tRNA ligase alpha subunit from Geobacillus kaustophilus (strain HTA426).